Here is a 94-residue protein sequence, read N- to C-terminus: Pyrimidine/purine nucleoside phosphorylase (94 aa).

Belongs to the nucleoside phosphorylase PpnP family.

It catalyses the reaction a purine D-ribonucleoside + phosphate = a purine nucleobase + alpha-D-ribose 1-phosphate. The catalysed reaction is adenosine + phosphate = alpha-D-ribose 1-phosphate + adenine. It carries out the reaction cytidine + phosphate = cytosine + alpha-D-ribose 1-phosphate. The enzyme catalyses guanosine + phosphate = alpha-D-ribose 1-phosphate + guanine. It catalyses the reaction inosine + phosphate = alpha-D-ribose 1-phosphate + hypoxanthine. The catalysed reaction is thymidine + phosphate = 2-deoxy-alpha-D-ribose 1-phosphate + thymine. It carries out the reaction uridine + phosphate = alpha-D-ribose 1-phosphate + uracil. The enzyme catalyses xanthosine + phosphate = alpha-D-ribose 1-phosphate + xanthine. In terms of biological role, catalyzes the phosphorolysis of diverse nucleosides, yielding D-ribose 1-phosphate and the respective free bases. Can use uridine, adenosine, guanosine, cytidine, thymidine, inosine and xanthosine as substrates. Also catalyzes the reverse reactions. This Pseudomonas entomophila (strain L48) protein is Pyrimidine/purine nucleoside phosphorylase.